We begin with the raw amino-acid sequence, 355 residues long: Protein FIP1 (355 aa).

The next 4 membrane-spanning stretches (helical) occupy residues 42 to 62, 72 to 92, 113 to 133, and 149 to 169; these read YLYM…PWMF, LLCC…QYFV, VVRL…LVIV, and IIML…IGYV. Residues 220 to 337 are a coiled coil; it reads LHFLSEEILC…RMSNSELQKE (118 aa). Residues 331–340 are compositionally biased toward basic and acidic residues; sequence NSELQKEVAS. A disordered region spans residues 331-355; sequence NSELQKEVASTRRKQMLETTTSEQP.

Belongs to the TMEM192 family. Interacts with FRI.

The protein localises to the membrane. The polypeptide is Protein FIP1 (Arabidopsis thaliana (Mouse-ear cress)).